The following is a 628-amino-acid chain: Venom redulysin 1 (628 aa).

The signal sequence occupies residues 1 to 19; sequence MSKLWLLLLLVAAFQAVHS. The propeptide occupies 20-368; the sequence is YPAAESDYLE…EDDVAESDEE (349 aa). A disordered region spans residues 290–313; sequence DYEEEEEEEEEEEFELEEDYEEDP. Positions 291-313 are enriched in acidic residues; it reads YEEEEEEEEEEEFELEEDYEEDP.

The protein belongs to the redulysin-like family. In terms of processing, contains 5 disulfide bonds. Expressed by the venom gland (posterior main gland) (at protein level).

The protein resides in the secreted. Highly abundant protein that may be responsible for the observed disruption of sensory neuron membranes, since it is homologous to proteins such as trialysin, which forms pores in lipid bilayers. Probable insecticidal toxin. The chain is Venom redulysin 1 from Platymeris rhadamanthus (Red spot assassin bug).